The primary structure comprises 81 residues: Photosystem I iron-sulfur center (81 aa).

4Fe-4S ferredoxin-type domains follow at residues 2–31 and 39–68; these read AHTVKIYDTCIGCTQCVRACPTDVLEMVPW and IASAPRTEDCVGCKRCESACPTDFLSIRVY. 8 residues coordinate [4Fe-4S] cluster: Cys-11, Cys-14, Cys-17, Cys-21, Cys-48, Cys-51, Cys-54, and Cys-58.

In terms of assembly, the eukaryotic PSI reaction center is composed of at least 11 subunits. [4Fe-4S] cluster serves as cofactor.

It is found in the plastid. The protein localises to the cyanelle thylakoid membrane. The catalysed reaction is reduced [plastocyanin] + hnu + oxidized [2Fe-2S]-[ferredoxin] = oxidized [plastocyanin] + reduced [2Fe-2S]-[ferredoxin]. In terms of biological role, apoprotein for the two 4Fe-4S centers FA and FB of photosystem I (PSI); essential for photochemical activity. FB is the terminal electron acceptor of PSI, donating electrons to ferredoxin. The C-terminus interacts with PsaA/B/D and helps assemble the protein into the PSI complex. Required for binding of PsaD and PsaE to PSI. PSI is a cytochrome c6-ferredoxin oxidoreductase, converting photonic excitation into a charge separation, which transfers an electron from the donor P700 chlorophyll pair to the spectroscopically characterized acceptors A0, A1, FX, FA and FB in turn. The protein is Photosystem I iron-sulfur center of Cyanophora paradoxa.